The primary structure comprises 875 residues: Protein translocase subunit SecA (875 aa).

ATP is bound by residues Gln-87, 105–109 (GEGKT), and Asp-512. Zn(2+) is bound by residues Cys-860, Cys-862, Cys-871, and His-872.

Belongs to the SecA family. In terms of assembly, monomer and homodimer. Part of the essential Sec protein translocation apparatus which comprises SecA, SecYEG and auxiliary proteins SecDF-YajC and YidC. Zn(2+) serves as cofactor.

The protein resides in the cell inner membrane. Its subcellular location is the cytoplasm. It carries out the reaction ATP + H2O + cellular proteinSide 1 = ADP + phosphate + cellular proteinSide 2.. Its function is as follows. Part of the Sec protein translocase complex. Interacts with the SecYEG preprotein conducting channel. Has a central role in coupling the hydrolysis of ATP to the transfer of proteins into and across the cell membrane, serving both as a receptor for the preprotein-SecB complex and as an ATP-driven molecular motor driving the stepwise translocation of polypeptide chains across the membrane. This is Protein translocase subunit SecA from Buchnera aphidicola subsp. Acyrthosiphon pisum (strain APS) (Acyrthosiphon pisum symbiotic bacterium).